A 519-amino-acid chain; its full sequence is ATP synthase subunit beta, mitochondrial (519 aa).

The transit peptide at 1–21 (MLTRFRSAVLRGAVSITGARA) directs the protein to the mitochondrion. Residues 184-191 (GAGVGKTV) and Arg216 each bind ATP.

This sequence belongs to the ATPase alpha/beta chains family. As to quaternary structure, F-type ATPases have 2 components, F(1) - the catalytic core - and F(o) - the membrane proton channel. F(1) has five subunits: alpha(3), beta(3), gamma(1), delta(1), epsilon(1), plus the additional subunit P18 (Tb427.05.1710) that is not present in F(1)F(o) ATP synthase from metazoa. Subunit P18 (Tb927.5.1710) interacts with the alpha subunit with a 1:1 stoichiometry; the interaction is direct. Subunit gamma is part of the central stalk. F(o) has three main subunits: a, b and c. The trypanosomal ATPase complex contains additional subunits that are not present in the F(1)F(o) ATP synthase from metazoa.

Its subcellular location is the mitochondrion. The protein localises to the mitochondrion inner membrane. It carries out the reaction ATP + H2O + 4 H(+)(in) = ADP + phosphate + 5 H(+)(out). Functionally, mitochondrial membrane ATP synthase (F(1)F(o) ATP synthase) produces ATP from ADP in the presence of a proton gradient across the membrane which is generated by electron transport complexes of the respiratory chain. F-type ATPases consist of two structural domains, F(1) - containing the extramembraneous catalytic core, and F(o) - containing the membrane proton channel, linked together by a central stalk and a peripheral stalk. During catalysis, ATP synthesis in the catalytic domain of F(1) is coupled via a rotary mechanism of the central stalk subunits to proton translocation. Subunits alpha and beta form the catalytic core in F(1). Rotation of the central stalk against the surrounding alpha(3)beta(3) subunits leads to hydrolysis of ATP in three separate catalytic sites on the beta subunits. Contrary to the procyclic, insect form that requires F(1)F(o) ATP synthase for ATP synthesis, the bloodstream form relies on ATP hydrolysis by F(1)F(o) ATP synthase to maintain its mitochondrial membrane potential. In Trypanosoma brucei brucei, this protein is ATP synthase subunit beta, mitochondrial.